Reading from the N-terminus, the 185-residue chain is dTTP/UTP pyrophosphatase (185 aa).

D64 functions as the Proton acceptor in the catalytic mechanism.

This sequence belongs to the Maf family. YhdE subfamily. The cofactor is a divalent metal cation.

It localises to the cytoplasm. It catalyses the reaction dTTP + H2O = dTMP + diphosphate + H(+). The catalysed reaction is UTP + H2O = UMP + diphosphate + H(+). Its function is as follows. Nucleoside triphosphate pyrophosphatase that hydrolyzes dTTP and UTP. May have a dual role in cell division arrest and in preventing the incorporation of modified nucleotides into cellular nucleic acids. This chain is dTTP/UTP pyrophosphatase, found in Leptospira borgpetersenii serovar Hardjo-bovis (strain JB197).